A 154-amino-acid chain; its full sequence is Small ribosomal subunit protein uS15 (154 aa).

The segment covering Met-1–His-11 has biased composition (basic residues). The interval Met-1–Lys-24 is disordered.

Belongs to the universal ribosomal protein uS15 family. Part of the 30S ribosomal subunit.

In Nanoarchaeum equitans (strain Kin4-M), this protein is Small ribosomal subunit protein uS15.